We begin with the raw amino-acid sequence, 201 residues long: Lipopolysaccharide core heptose(II)-phosphate phosphatase (201 aa).

The first 35 residues, 1–35, serve as a signal peptide directing secretion; the sequence is MLAFTLRFIKNKRYLATLAGALVIIAGLTSQHAWS.

Belongs to the phosphoglycerate mutase family. Ais subfamily.

It localises to the periplasm. It participates in bacterial outer membrane biogenesis; lipopolysaccharide metabolism. In terms of biological role, catalyzes the dephosphorylation of heptose(II) of the outer membrane lipopolysaccharide core. This Salmonella heidelberg (strain SL476) protein is Lipopolysaccharide core heptose(II)-phosphate phosphatase.